The chain runs to 259 residues: MSRVSDRVAEKVALISGAARGMGASHAQVLAAHGANVVIADLLEDEGRALAEKINAEFNTGIGRDVALFVHLDVTDYESWTAAVGAAVERFGTLDVLVNNAGIFTRGSVEDADVDEWRRTIEIDLTGNFLGMKAAVPAMKAAGGSIINISSIAGLVGFKNRAAYAAAKWGVQGLTKTSAMDLGPYNIRVNSVHPGSVKTPMTAGLKRGFGQIPLGRDAETQEISDLILFLASDESSFMTGANLAIDGGETAGNNLRQDA.

The NAD(+) site is built by Arg-20, Met-22, Asp-41, Asp-73, Val-74, Asn-100, Tyr-164, Lys-168, Val-197, Thr-199, and Thr-202. Catalysis depends on Tyr-164, which acts as the Proton acceptor.

The protein belongs to the short-chain dehydrogenases/reductases (SDR) family. In terms of assembly, homodimer. Homotetramer.

The catalysed reaction is trans-4-hydroxycyclohexane-1-carboxylate + NAD(+) = 4-oxocyclohexane-1-carboxylate + NADH + H(+). With respect to regulation, strongly inhibited by N-bromosuccinimide. Not inhibited by sulfhydryl reagents, such as iodoacetic acid, iodoacetamide, N-ethylmaleimide and p-hydroxymercuribenzoic acid. In terms of biological role, dehydrogenase involved in a cyclohexanecarboxylate (CHCA) degradation pathway. Catalyzes the NAD(+)-dependent dehydrogenation of trans-4-hydroxycyclohexanecarboxylate (trans-4-hydroxyCHCA) to form 4-oxocyclohexanecarboxylate (4-oxoCHCA). Is highly specific for the trans-4-hydroxy derivative and shows only weak activity with cis-4-hydroxyCHCA. Can also catalyze the reverse reaction (4-oxoCHCA reduction) with a higher catalytic efficiency. In the reverse reaction, is highly specific for 4-oxoCHCA and cannot use either the 2-oxo or the 3-oxo homolog as substrate. Cannot use NADP(+). In Sinomonas cyclohexanicum (Corynebacterium cyclohexanicum), this protein is Trans-4-hydroxycyclohexanecarboxylate dehydrogenase.